The following is a 370-amino-acid chain: Chaperone protein DnaJ (370 aa).

The J domain maps to 6 to 70; that stretch reads DYYEVLGVQR…EKRSMYDRFG (65 aa). Residues 128 to 208 form a CR-type zinc finger; that stretch reads GVEKTIEYRR…CRGEGRIRQT (81 aa). Cysteine 141, cysteine 144, cysteine 158, cysteine 161, cysteine 182, cysteine 185, cysteine 196, and cysteine 199 together coordinate Zn(2+). CXXCXGXG motif repeat units lie at residues 141–148, 158–165, 182–189, and 196–203; these read CPACRGSG, CPKCGGLG, CDMCRGEG, and CRECRGEG.

The protein belongs to the DnaJ family. In terms of assembly, homodimer. Zn(2+) serves as cofactor.

Its subcellular location is the cytoplasm. In terms of biological role, participates actively in the response to hyperosmotic and heat shock by preventing the aggregation of stress-denatured proteins and by disaggregating proteins, also in an autonomous, DnaK-independent fashion. Unfolded proteins bind initially to DnaJ; upon interaction with the DnaJ-bound protein, DnaK hydrolyzes its bound ATP, resulting in the formation of a stable complex. GrpE releases ADP from DnaK; ATP binding to DnaK triggers the release of the substrate protein, thus completing the reaction cycle. Several rounds of ATP-dependent interactions between DnaJ, DnaK and GrpE are required for fully efficient folding. Also involved, together with DnaK and GrpE, in the DNA replication of plasmids through activation of initiation proteins. The protein is Chaperone protein DnaJ of Roseiflexus castenholzii (strain DSM 13941 / HLO8).